The primary structure comprises 342 residues: Peptide chain release factor 1 (342 aa).

An N5-methylglutamine modification is found at Q211. A disordered region spans residues 262–282 (KEREISQKRKSQIGTGERSEK).

The protein belongs to the prokaryotic/mitochondrial release factor family. In terms of processing, methylated by PrmC. Methylation increases the termination efficiency of RF1.

It localises to the cytoplasm. In terms of biological role, peptide chain release factor 1 directs the termination of translation in response to the peptide chain termination codons UAG and UAA. The polypeptide is Peptide chain release factor 1 (prfA) (Thermotoga maritima (strain ATCC 43589 / DSM 3109 / JCM 10099 / NBRC 100826 / MSB8)).